Reading from the N-terminus, the 485-residue chain is Ribulose bisphosphate carboxylase large chain 2 (485 aa).

Substrate contacts are provided by asparagine 124 and threonine 174. Residue lysine 176 is the Proton acceptor of the active site. Lysine 178 provides a ligand contact to substrate. Mg(2+) contacts are provided by lysine 202, aspartate 204, and glutamate 205. Lysine 202 carries the N6-carboxylysine modification. The Proton acceptor role is filled by histidine 294. Substrate contacts are provided by arginine 295, histidine 327, and serine 379.

This sequence belongs to the RuBisCO large chain family. Type I subfamily. Heterohexadecamer of 8 large chains and 8 small chains. It depends on Mg(2+) as a cofactor.

It catalyses the reaction 2 (2R)-3-phosphoglycerate + 2 H(+) = D-ribulose 1,5-bisphosphate + CO2 + H2O. It carries out the reaction D-ribulose 1,5-bisphosphate + O2 = 2-phosphoglycolate + (2R)-3-phosphoglycerate + 2 H(+). In terms of biological role, ruBisCO catalyzes two reactions: the carboxylation of D-ribulose 1,5-bisphosphate, the primary event in carbon dioxide fixation, as well as the oxidative fragmentation of the pentose substrate. Both reactions occur simultaneously and in competition at the same active site. The chain is Ribulose bisphosphate carboxylase large chain 2 from Rhodopseudomonas palustris (strain BisB5).